Reading from the N-terminus, the 634-residue chain is MVKQTTEMNDASYLFNTGAGFNSQDYLGCHLAASGRAVFRVWAPHAKAVGVVGDFNDWQPSALKLLGATGIWQGQVPNVHAGQLYKFQITTPTGQVQLKIDPFAQQFERKPGDAAVVVEPMTMRWHDSLWLARRKKSRAANRPINIYEVHLGSWRRHLDGSYYTYAELAAELIPYVKQRGYTHIELMPVMEHLLDASWGYQQLGYFAPTSRFGKRDSFLSFVDQCHQANIGVFVDWVPGHFIRNYDALYQYDGTPTFEYADPERANNRRWGAWNFDLGKTQVQSFLISSAEYWLDQCHLDGLRVDAVSNMLYCDYDEGREGQVNQYGDNRNLEGIAFLQKLNTTVLTHHPDILMIAEESSAYPQVTGSVANGGLGFNYKWNMGWMHDTLDFFMMDPLYRHDHFNLLTFAFVYMFDERFILPFSHDEVVHGKKSLMHKMSGDRYNQFANLRTMLTYMAAFPGKQLNFMGSEWGQFLEWRDWSALEWVDLKDDLNHRMQQFTTQLNAVYRHNRPLWEQDHDPAGIIYTHTDDPDSSTMGFIRQAKRKYSFVVAAFNFVPVERQDYRIGVPYRGRYELLLNTEAQAFGGTWTKLETTFTAVDKPYRGQPASFTVTLPAMGALLIRPVKVIGGVKHAR.

The active-site Nucleophile is the Asp-305. The active-site Proton donor is Glu-357.

Belongs to the glycosyl hydrolase 13 family. GlgB subfamily. Monomer.

The catalysed reaction is Transfers a segment of a (1-&gt;4)-alpha-D-glucan chain to a primary hydroxy group in a similar glucan chain.. It participates in glycan biosynthesis; glycogen biosynthesis. Its function is as follows. Catalyzes the formation of the alpha-1,6-glucosidic linkages in glycogen by scission of a 1,4-alpha-linked oligosaccharide from growing alpha-1,4-glucan chains and the subsequent attachment of the oligosaccharide to the alpha-1,6 position. This is 1,4-alpha-glucan branching enzyme GlgB from Lactiplantibacillus plantarum (strain ATCC BAA-793 / NCIMB 8826 / WCFS1) (Lactobacillus plantarum).